Consider the following 504-residue polypeptide: Probable cytosol aminopeptidase (504 aa).

Lys-263 and Asp-268 together coordinate Mn(2+). Lys-275 is a catalytic residue. Positions 286, 345, and 347 each coordinate Mn(2+). Residue Arg-349 is part of the active site.

The protein belongs to the peptidase M17 family. The cofactor is Mn(2+).

It is found in the cytoplasm. The enzyme catalyses Release of an N-terminal amino acid, Xaa-|-Yaa-, in which Xaa is preferably Leu, but may be other amino acids including Pro although not Arg or Lys, and Yaa may be Pro. Amino acid amides and methyl esters are also readily hydrolyzed, but rates on arylamides are exceedingly low.. It catalyses the reaction Release of an N-terminal amino acid, preferentially leucine, but not glutamic or aspartic acids.. Presumably involved in the processing and regular turnover of intracellular proteins. Catalyzes the removal of unsubstituted N-terminal amino acids from various peptides. The sequence is that of Probable cytosol aminopeptidase from Sulfurihydrogenibium sp. (strain YO3AOP1).